The primary structure comprises 153 residues: Insulin-like growth factor 1 (153 aa).

The interval 49–77 is b; it reads GPETLCGAELVDALQFVCGDRGFYFNKPT. 3 disulfides stabilise this stretch: C54/C96, C66/C109, and C95/C100. The segment at 78 to 89 is c; the sequence is GYGSSSRRAPQT. The tract at residues 90–110 is a; sequence GIVDECCFRSCDLRRLEMYCA. Positions 111–118 are d; that stretch reads PLKPAKSA. Residues 119-153 constitute a propeptide, e peptide; it reads RSVRAQRHTDMPKAQKEVHLKNASRGSAGNKNYRM. The tract at residues 120 to 153 is disordered; the sequence is SVRAQRHTDMPKAQKEVHLKNASRGSAGNKNYRM. Residues 125–138 are compositionally biased toward basic and acidic residues; it reads RHTDMPKAQKEVHL. Positions 142–153 are enriched in polar residues; it reads SRGSAGNKNYRM.

This sequence belongs to the insulin family. As to quaternary structure, forms a ternary complex with IGFR1 and ITGAV:ITGB3. Forms a ternary complex with IGFR1 and ITGA6:ITGB4. Forms a ternary complex with IGFBP3 and ALS.

It is found in the secreted. In terms of biological role, the insulin-like growth factors, isolated from plasma, are structurally and functionally related to insulin but have a much higher growth-promoting activity. May be a physiological regulator of [1-14C]-2-deoxy-D-glucose (2DG) transport and glycogen synthesis in osteoblasts. Stimulates glucose transport in bone-derived osteoblastic (PyMS) cells and is effective at much lower concentrations than insulin, not only regarding glycogen and DNA synthesis but also with regard to enhancing glucose uptake. May play a role in synapse maturation. Ca(2+)-dependent exocytosis of IGF1 is required for sensory perception of smell in the olfactory bulb. Acts as a ligand for IGF1R. Binds to the alpha subunit of IGF1R, leading to the activation of the intrinsic tyrosine kinase activity which autophosphorylates tyrosine residues in the beta subunit thus initiating a cascade of down-stream signaling events leading to activation of the PI3K-AKT/PKB and the Ras-MAPK pathways. Binds to integrins ITGAV:ITGB3 and ITGA6:ITGB4. Its binding to integrins and subsequent ternary complex formation with integrins and IGFR1 are essential for IGF1 signaling. Induces the phosphorylation and activation of IGFR1, MAPK3/ERK1, MAPK1/ERK2 and AKT1. As part of the MAPK/ERK signaling pathway, acts as a negative regulator of apoptosis in cardiomyocytes via promotion of STUB1/CHIP-mediated ubiquitination and degradation of ICER-type isoforms of CREM. The sequence is that of Insulin-like growth factor 1 from Panthera tigris altaica (Siberian tiger).